Consider the following 343-residue polypeptide: L-threonine 3-dehydrogenase (343 aa).

Cys40 contributes to the Zn(2+) binding site. Residues Thr42 and His45 each act as charge relay system in the active site. Positions 65, 66, 95, 98, 101, and 109 each coordinate Zn(2+). Residues Ile177, Asp197, Arg202, 264-266, and 288-289 each bind NAD(+); these read LGI and IY.

The protein belongs to the zinc-containing alcohol dehydrogenase family. As to quaternary structure, homotetramer. Requires Zn(2+) as cofactor.

The protein localises to the cytoplasm. The enzyme catalyses L-threonine + NAD(+) = (2S)-2-amino-3-oxobutanoate + NADH + H(+). Its pathway is amino-acid degradation; L-threonine degradation via oxydo-reductase pathway; glycine from L-threonine: step 1/2. Its function is as follows. Catalyzes the NAD(+)-dependent oxidation of L-threonine to 2-amino-3-ketobutyrate. In Photobacterium profundum (strain SS9), this protein is L-threonine 3-dehydrogenase.